The chain runs to 208 residues: Glycerol-3-phosphate acyltransferase (208 aa).

5 helical membrane passes run 3-23, 55-75, 81-101, 113-133, and 155-175; these read IIIM…VIIG, IVMV…TLLF, YTLL…YIGF, ILLA…LLLV, and IFYY…LFIF.

It belongs to the PlsY family. Probably interacts with PlsX.

It localises to the cell membrane. The enzyme catalyses an acyl phosphate + sn-glycerol 3-phosphate = a 1-acyl-sn-glycero-3-phosphate + phosphate. The protein operates within lipid metabolism; phospholipid metabolism. Its function is as follows. Catalyzes the transfer of an acyl group from acyl-phosphate (acyl-PO(4)) to glycerol-3-phosphate (G3P) to form lysophosphatidic acid (LPA). This enzyme utilizes acyl-phosphate as fatty acyl donor, but not acyl-CoA or acyl-ACP. In Lactiplantibacillus plantarum (strain ATCC BAA-793 / NCIMB 8826 / WCFS1) (Lactobacillus plantarum), this protein is Glycerol-3-phosphate acyltransferase.